A 358-amino-acid polypeptide reads, in one-letter code: MPAHILQEISGSYSATTTITAPPSGGQQNGGEKFEKNPHHWGADVRPEIKDDLYDPSYQDEEGPPPKLEYVWRNIVLMALLHIGALYGITLVPSCKVYTCLFAYLYYVISALGITAGAHRLWSHRTYKARLPLRLFLIIANTMAFQNDVYEWARDHRAHHKFSETHADPHNSRRGFFFSHVGWLLVRKHPAVKEKGGKLDMSDLKAEKLVMFQRRYYKPGLLLMCFILPTLVPWYCWGETFVNSLCVSTFLRYAVVLNATWLVNSAAHLYGYRPYDKNISSRENILVSMGAVGEGFHNYHHAFPYDYSASEYRWHINFTTFFIDCMALLGLAYDRKRVSKAAVLARIKRTGEESCKSG.

Over 1–71 the chain is Cytoplasmic; it reads MPAHILQEIS…EGPPPKLEYV (71 aa). The disordered stretch occupies residues 14-43; that stretch reads SATTTITAPPSGGQQNGGEKFEKNPHHWGA. A compositionally biased stretch (basic and acidic residues) spans 32 to 43; the sequence is EKFEKNPHHWGA. The chain crosses the membrane as a helical span at residues 72–92; sequence WRNIVLMALLHIGALYGITLV. Asparagine 74 is a substrate binding site. Over 93–96 the chain is Lumenal; it reads PSCK. A helical transmembrane segment spans residues 97–117; that stretch reads VYTCLFAYLYYVISALGITAG. At 118–216 the chain is on the cytoplasmic side; that stretch reads AHRLWSHRTY…EKLVMFQRRY (99 aa). Positions 119 and 124 each coordinate Fe cation. The Histidine box-1 signature appears at 119 to 124; that stretch reads HRLWSH. Residues asparagine 147, arginine 154, and aspartate 155 each contribute to the substrate site. Residues histidine 156, histidine 159, and histidine 160 each contribute to the Fe cation site. Positions 156–160 match the Histidine box-2 motif; sequence HRAHH. Residues arginine 187 and lysine 188 each coordinate substrate. The chain crosses the membrane as a helical span at residues 217-236; sequence YKPGLLLMCFILPTLVPWYC. Topologically, residues 237-240 are lumenal; sequence WGET. The helical transmembrane segment at 241–262 threads the bilayer; that stretch reads FVNSLCVSTFLRYAVVLNATWL. Tryptophan 261 is a binding site for substrate. Residues 263 to 358 lie on the Cytoplasmic side of the membrane; sequence VNSAAHLYGY…RTGEESCKSG (96 aa). Fe cation contacts are provided by histidine 268, histidine 297, histidine 300, and histidine 301. The Histidine box-3 signature appears at 297-301; it reads HNYHH.

This sequence belongs to the fatty acid desaturase type 1 family. Requires Fe(2+) as cofactor. Detected in brain and adipose tissue, and at much lower levels in testis. Detected in liver when rats are kept on a fat-free diet, but not when their food contains unsaturated fatty acids.

It localises to the endoplasmic reticulum membrane. The protein localises to the microsome membrane. The enzyme catalyses octadecanoyl-CoA + 2 Fe(II)-[cytochrome b5] + O2 + 2 H(+) = (9Z)-octadecenoyl-CoA + 2 Fe(III)-[cytochrome b5] + 2 H2O. It catalyses the reaction hexadecanoyl-CoA + 2 Fe(II)-[cytochrome b5] + O2 + 2 H(+) = (9Z)-hexadecenoyl-CoA + 2 Fe(III)-[cytochrome b5] + 2 H2O. Functionally, stearoyl-CoA desaturase that utilizes O(2) and electrons from reduced cytochrome b5 to introduce the first double bond into saturated fatty acyl-CoA substrates. Catalyzes the insertion of a cis double bond at the delta-9 position into fatty acyl-CoA substrates including palmitoyl-CoA and stearoyl-CoA. Gives rise to a mixture of 16:1 and 18:1 unsaturated fatty acids. Contributes to the biosynthesis of membrane phospholipids, cholesterol esters and triglycerides, especially during embryonic development and in neonates. Important for normal permeability barrier function of the skin in neonates. The chain is Stearoyl-CoA desaturase 2 (Scd2) from Rattus norvegicus (Rat).